Consider the following 535-residue polypeptide: Bifunctional purine biosynthesis protein PurH (535 aa).

Residues 6 to 151 form the MGS-like domain; the sequence is TRLPIRRALI…KNHKDVAIVV (146 aa).

This sequence belongs to the PurH family.

The enzyme catalyses (6R)-10-formyltetrahydrofolate + 5-amino-1-(5-phospho-beta-D-ribosyl)imidazole-4-carboxamide = 5-formamido-1-(5-phospho-D-ribosyl)imidazole-4-carboxamide + (6S)-5,6,7,8-tetrahydrofolate. It carries out the reaction IMP + H2O = 5-formamido-1-(5-phospho-D-ribosyl)imidazole-4-carboxamide. It functions in the pathway purine metabolism; IMP biosynthesis via de novo pathway; 5-formamido-1-(5-phospho-D-ribosyl)imidazole-4-carboxamide from 5-amino-1-(5-phospho-D-ribosyl)imidazole-4-carboxamide (10-formyl THF route): step 1/1. It participates in purine metabolism; IMP biosynthesis via de novo pathway; IMP from 5-formamido-1-(5-phospho-D-ribosyl)imidazole-4-carboxamide: step 1/1. This chain is Bifunctional purine biosynthesis protein PurH, found in Pseudomonas fluorescens (strain SBW25).